A 425-amino-acid polypeptide reads, in one-letter code: Histidine--tRNA ligase (425 aa).

This sequence belongs to the class-II aminoacyl-tRNA synthetase family. As to quaternary structure, homodimer.

The protein localises to the cytoplasm. The enzyme catalyses tRNA(His) + L-histidine + ATP = L-histidyl-tRNA(His) + AMP + diphosphate + H(+). The sequence is that of Histidine--tRNA ligase from Streptococcus uberis (strain ATCC BAA-854 / 0140J).